Consider the following 82-residue polypeptide: DNA-directed RNA polymerase subunit omega (82 aa).

This sequence belongs to the RNA polymerase subunit omega family. In terms of assembly, the RNAP catalytic core consists of 2 alpha, 1 beta, 1 beta' and 1 omega subunit. When a sigma factor is associated with the core the holoenzyme is formed, which can initiate transcription.

The enzyme catalyses RNA(n) + a ribonucleoside 5'-triphosphate = RNA(n+1) + diphosphate. In terms of biological role, promotes RNA polymerase assembly. Latches the N- and C-terminal regions of the beta' subunit thereby facilitating its interaction with the beta and alpha subunits. In Lachnoclostridium phytofermentans (strain ATCC 700394 / DSM 18823 / ISDg) (Clostridium phytofermentans), this protein is DNA-directed RNA polymerase subunit omega.